Here is a 256-residue protein sequence, read N- to C-terminus: Ribosomal RNA small subunit methyltransferase J (256 aa).

S-adenosyl-L-methionine-binding positions include 101-102 (RD), 117-118 (ER), and aspartate 174.

Belongs to the methyltransferase superfamily. RsmJ family.

The protein resides in the cytoplasm. It carries out the reaction guanosine(1516) in 16S rRNA + S-adenosyl-L-methionine = N(2)-methylguanosine(1516) in 16S rRNA + S-adenosyl-L-homocysteine + H(+). Specifically methylates the guanosine in position 1516 of 16S rRNA. The polypeptide is Ribosomal RNA small subunit methyltransferase J (Chromohalobacter salexigens (strain ATCC BAA-138 / DSM 3043 / CIP 106854 / NCIMB 13768 / 1H11)).